The primary structure comprises 872 residues: Leucine-rich repeat-containing protein 66 (872 aa).

The helical transmembrane segment at 4 to 24 (FYVRVTILVTGLCFVETVTTP) threads the bilayer. Residues Asn-45 and Asn-108 are each glycosylated (N-linked (GlcNAc...) asparagine). LRR repeat units lie at residues 142-164 (RLQV…WKLK), 165-186 (SLRS…DFHG), 189-210 (QLES…AFKG), 213-234 (KLQV…VTIA), and 239-259 (HLEL…VNFQ). The segment at 339–363 (LRGMWPQSPVELRDSQDEQVTDRKD) is disordered. Over residues 349-363 (ELRDSQDEQVTDRKD) the composition is skewed to basic and acidic residues. A helical transmembrane segment spans residues 371 to 391 (LAICLSVFITFVVAFCLGAFA). Residues 467-483 (QMLGSNGTDPGHQQSPE) show a composition bias toward polar residues. 4 disordered regions span residues 467–501 (QMLG…VLPS), 560–579 (GTFP…SQPR), 695–761 (NYES…SQRI), and 776–872 (LISG…SKHW). Asn-472 carries an N-linked (GlcNAc...) asparagine glycan. Positions 484 to 493 (QLKDSNESRS) are enriched in basic and acidic residues. Phosphoserine is present on Ser-718. 3 stretches are compositionally biased toward polar residues: residues 725 to 736 (SVENDGTSQPLP), 746 to 760 (SVTS…TSQR), and 785 to 805 (CETN…STWP). Ser-752 carries the phosphoserine modification. Residues 831 to 841 (VDWHYSLRDLE) are compositionally biased toward basic and acidic residues.

The protein resides in the membrane. This chain is Leucine-rich repeat-containing protein 66 (Lrrc66), found in Mus musculus (Mouse).